Consider the following 159-residue polypeptide: Transcription antitermination protein NusB (159 aa).

The protein belongs to the NusB family.

Its function is as follows. Involved in transcription antitermination. Required for transcription of ribosomal RNA (rRNA) genes. Binds specifically to the boxA antiterminator sequence of the ribosomal RNA (rrn) operons. The sequence is that of Transcription antitermination protein NusB from Stenotrophomonas maltophilia (strain K279a).